Reading from the N-terminus, the 280-residue chain is Formyltetrahydrofolate deformylase (280 aa).

Residues 8–86 (VLRTICPDQK…RELNPAGRRR (79 aa)) enclose the ACT domain. D225 is an active-site residue.

Belongs to the PurU family.

The enzyme catalyses (6R)-10-formyltetrahydrofolate + H2O = (6S)-5,6,7,8-tetrahydrofolate + formate + H(+). Its pathway is purine metabolism; IMP biosynthesis via de novo pathway; formate from 10-formyl-5,6,7,8-tetrahydrofolate: step 1/1. Functionally, catalyzes the hydrolysis of 10-formyltetrahydrofolate (formyl-FH4) to formate and tetrahydrofolate (FH4). In Escherichia coli O6:H1 (strain CFT073 / ATCC 700928 / UPEC), this protein is Formyltetrahydrofolate deformylase.